A 1290-amino-acid chain; its full sequence is Alpha-amylase (1290 aa).

The N-terminal stretch at 1–31 (MTRKTRYLHQITTLILGGLLIVPAAAPPVSA) is a signal peptide. The active-site Nucleophile is glutamate 231. The active-site Proton donor is the aspartate 373. The region spanning 817–902 (VPANLQATVM…AAATATTPAG (86 aa)) is the Fibronectin type-III domain. Residues 902–978 (GNHVTVYYKQ…SNGGSNYLFG (77 aa)) are CBM25. Composition is skewed to low complexity over residues 994–1008 (APVA…APTA) and 1016–1031 (VTPT…VAPT). A disordered region spans residues 994 to 1037 (APVAPSATPTVAPTATPTPKPSVTPTVTPITTPTVAPTLSPTPT). Positions 1092 to 1171 (GNSATIYYKN…NGGSNYHFGT (80 aa)) are CBM25. The CBM20 domain maps to 1183 to 1289 (TGEPQADSVT…VTLTVQRWKD (107 aa)).

It belongs to the glycosyl hydrolase 119 (GH119) family.

It is found in the secreted. It catalyses the reaction Endohydrolysis of (1-&gt;4)-alpha-D-glucosidic linkages in polysaccharides containing three or more (1-&gt;4)-alpha-linked D-glucose units.. In terms of biological role, acts on maltooligosaccharides that have a degree of polymerization (DP) of 4 or more, amylose, and soluble or raw starch to produce glucose and maltooligosaccharides up to DP5 by a hydrolysis reaction. Also acts on maltooligosyl trehaloses that have DP5 or more to produce trehalose as the major hydrolysis product. This Niallia circulans (Bacillus circulans) protein is Alpha-amylase.